We begin with the raw amino-acid sequence, 366 residues long: Ribosomal RNA large subunit methyltransferase M (366 aa).

Residues S188, 221 to 224 (CPGG), D240, D260, and D277 contribute to the S-adenosyl-L-methionine site. K306 (proton acceptor) is an active-site residue.

The protein belongs to the class I-like SAM-binding methyltransferase superfamily. RNA methyltransferase RlmE family. RlmM subfamily. Monomer.

Its subcellular location is the cytoplasm. It catalyses the reaction cytidine(2498) in 23S rRNA + S-adenosyl-L-methionine = 2'-O-methylcytidine(2498) in 23S rRNA + S-adenosyl-L-homocysteine + H(+). In terms of biological role, catalyzes the 2'-O-methylation at nucleotide C2498 in 23S rRNA. This Musicola paradisiaca (strain Ech703) (Dickeya paradisiaca) protein is Ribosomal RNA large subunit methyltransferase M.